A 290-amino-acid polypeptide reads, in one-letter code: UPF0046 protein K07C11.7 (290 aa).

Residues M1 to A22 form the signal peptide. N204 is a glycosylation site (N-linked (GlcNAc...) asparagine).

It belongs to the UPF0046 family.

This Caenorhabditis elegans protein is UPF0046 protein K07C11.7.